Reading from the N-terminus, the 196-residue chain is Peptidyl-tRNA hydrolase (196 aa).

Position 17 (Tyr-17) interacts with tRNA. The active-site Proton acceptor is His-22. 3 residues coordinate tRNA: Phe-68, Asn-70, and Asn-116.

It belongs to the PTH family. In terms of assembly, monomer.

The protein localises to the cytoplasm. The enzyme catalyses an N-acyl-L-alpha-aminoacyl-tRNA + H2O = an N-acyl-L-amino acid + a tRNA + H(+). Hydrolyzes ribosome-free peptidyl-tRNAs (with 1 or more amino acids incorporated), which drop off the ribosome during protein synthesis, or as a result of ribosome stalling. Its function is as follows. Catalyzes the release of premature peptidyl moieties from peptidyl-tRNA molecules trapped in stalled 50S ribosomal subunits, and thus maintains levels of free tRNAs and 50S ribosomes. The polypeptide is Peptidyl-tRNA hydrolase (Yersinia pseudotuberculosis serotype O:1b (strain IP 31758)).